The primary structure comprises 3960 residues: Replicase polyprotein 1ab (3960 aa).

Residues C8–C28 form a C4-type; atypical zinc finger. One can recognise a Peptidase C31 domain in the interval E69–M180. The segment at E69–T182 is PCP1-alpha. Catalysis depends on for Nsp1-alpha papain-like cysteine proteinase activity residues C76 and H146. Positions V199–S200 are important for host EIF2AK2 inhibition. The tract at residues D263–Y382 is PCP1-beta. Positions D263 to G383 constitute a Peptidase C32 domain. Residues C270 and H339 each act as for Nsp1-beta papain-like cysteine proteinase activity in the active site. The interval L426–P513 is OTU-like. The Peptidase C33 domain maps to H428–L535. Residues C437 and H506 each act as for Nsp2 cysteine proteinase activity in the active site. Disordered stretches follow at residues R809–S882, T899–G979, and P1156–P1213. Positions W810–V819 are enriched in pro residues. Helical transmembrane passes span L1266–F1286, G1296–V1316, S1345–A1365, I1368–V1388, L1583–V1603, A1650–I1670, C1685–F1705, and I1719–V1739. Positions L1266–V1388 are HD1. The HD2 stretch occupies residues L1583–W1745. A Peptidase S32 domain is found at G1810 to E2013. Active-site charge relay system; for 3C-like serine proteinase activity residues include H1848, D1873, and S1927. 5 helical membrane passes run L2012 to M2032, F2060 to I2080, W2092 to T2112, S2137 to F2157, and H2164 to G2184. The tract at residues W2036 to F2157 is HD3. Residues P2329–D2358 are disordered. A compositionally biased stretch (pro residues) spans T2330–P2344. The NiRAN domain maps to I2488–G2650. The region spanning G2889 to Y3023 is the RdRp catalytic domain. Residues G3144–L3207 enclose the AV ZBD domain. Zn(2+) is bound by residues C3150, C3153, C3163, C3168, H3171, H3173, H3175, H3177, C3184, H3186, C3193, and C3196. The 153-residue stretch at A3264–L3416 folds into the (+)RNA virus helicase ATP-binding domain. G3292–T3299 contributes to the ATP binding site. In terms of domain architecture, (+)RNA virus helicase C-terminal spans K3417–V3545. The 97-residue stretch at E3584–Q3680 folds into the AV-Nsp11N/CoV-Nsp15M domain. Residues L3682–F3804 form the NendoU domain. Catalysis depends on residues H3713, H3728, and K3757.

Belongs to the arteriviridae polyprotein family. As to quaternary structure, nsp1-alpha papain-like: Interacts with host RNF31. Interacts with host EIF2AK2; this interaction occurs in host stress granules and leads to EIF2AK2 inhibition. Interacts with host G3BP1; this interaction probably plays a role in Nsp1-beta-mediated inhibition of host EIF2AK2. In terms of assembly, interacts with host DDX18; this interaction redistributes host DDX18 to the cytoplasm. As to quaternary structure, interacts with host IFITM1. Interacts with host DDX5. In terms of assembly, interacts with host OTULIN. As to quaternary structure, interacts with host LGALS3. Post-translationally, specific enzymatic cleavages in vivo by its own proteases yield mature proteins. Nsp1 is autocleaved into two subunits, Nsp1-alpha and Nsp1-beta. There are two alternative pathways for processing. Either nsp4-5 is cleaved, which represents the major pathway or the nsp5-6 and nsp6-7 are processed, which represents the minor pathway. The major pathway occurs when nsp2 acts as a cofactor for nsp4.

The protein localises to the host nucleus. It is found in the host cytoplasm. Its subcellular location is the host membrane. It localises to the host endoplasmic reticulum. The protein resides in the host perinuclear region. It catalyses the reaction RNA(n) + a ribonucleoside 5'-triphosphate = RNA(n+1) + diphosphate. It carries out the reaction ATP + H2O = ADP + phosphate + H(+). The catalysed reaction is Thiol-dependent hydrolysis of ester, thioester, amide, peptide and isopeptide bonds formed by the C-terminal Gly of ubiquitin (a 76-residue protein attached to proteins as an intracellular targeting signal).. The enzyme catalyses uridylyl-uridylyl-ribonucleotide-RNA = a 3'-end uridylyl-2',3'-cyclophospho-uridine-RNA + a 5'-end dephospho-ribonucleoside-RNA. Its function is as follows. Contains the activities necessary for the transcription of negative stranded RNA, leader RNA, subgenomic mRNAs and progeny virion RNA as well as proteinases responsible for the cleavage of the polyprotein into functional products. Inhibits host IFN-beta production. Plays a role in the degradation of the host transcriptional activator CREBBP protein. The degradation of host CREBBP which is a key component of the IFN enhanceosome is likely responsible for the inhibition of interferon mediated by Nsp1-alpha. Also participates in the inhibition of host NF-kappa-B activation by counteracting LUBAC-dependent induction of NF-kappa-B. Reduces host NEMO ubiquitination by blocking the interaction between the two LUBAC complex components RNF31 and SHARPIN. In terms of biological role, plays a role in blocking host mRNA nuclear export to the cytoplasm and subversion of host protein synthesis. Additionally, inhibits the interferon-activated JAK/STAT signal transduction by mediating the ubiquitination and subsequent proteasomal degradation of host KPNA1. Repurposes the host antiviral stress granules into a proviral platform to counteract the EIF2AK2/PKR restriction, thereby regulating the host inflammatory response. Functionally, multifunctional protein that acts as a viral protease and as a viral antagonist of host immune response. Cleaves the nsp2/nsp3 site in the viral polyprotein. Displays deubiquitinating activity that cleaves both ubiquitinated and ISGylated products and therefore inhibits ubiquitin and ISG15-dependent host innate immunity. Also deubiquinates host NFKBIA, thereby interfering with NFKBIA degradation and impairing subsequent NF-kappa-B activation. Its function is as follows. Plays a role in the inhibition of the immune response by interacting with host IFITM1. This interaction leads to the proteasomal degradation of the IFN-induced antiviral protein IFITM1. Cleaves the majority of cleavage sites present in the C-terminus of the polyprotein. Triggers host apoptosis through caspase-3, -8, and -9 activations. Subverts host innate immune responses through its protease activity. Targets the NF-kappa-B essential modulator NEMO and mediates its cleavage. Blocks host interferon beta induction and downstream signaling by cleaving mitochondrial MAVS, dislodging it from the mitochondria. Impairs host defense by cleaving host mRNA-decapping enzyme DCP1A to attenuate its antiviral activity. In terms of biological role, plays a role in the initial induction of autophagosomes from host endoplasmic reticulum. Functionally, plays a role in the inhibition of host STAT3 signaling pathway by inducing the degradation of STAT3. Its function is as follows. Responsible for replication and transcription of the viral RNA genome. Displays RNA and DNA duplex-unwinding activities with 5' to 3' polarity. In terms of biological role, plays a role in viral transcription/replication and prevents the simultaneous activation of host cell dsRNA sensors, such as MDA5/IFIH1, OAS, PKR and NLRP3 inflammasome. Acts by degrading the 5'-polyuridines generated during replication of the poly(A) region of viral genomic and subgenomic RNAs. Catalyzes a two-step reaction in which a 2'3'-cyclic phosphate (2'3'-cP) is first generated by 2'-O transesterification, which is then hydrolyzed to a 3'-phosphate (3'-P). If not degraded, poly(U) RNA would hybridize with poly(A) RNA tails and activate host dsRNA sensors. Also plays a role in the inhibition of host type I interferon production by recruiting host OTULIN to promote removal of linear ubiquitination targeting host NEMO. The polypeptide is Replicase polyprotein 1ab (rep) (Porcine reproductive and respiratory syndrome virus (strain VR-2332) (PRRSV)).